The primary structure comprises 38 residues: Large ribosomal subunit protein bL36A (38 aa).

The protein belongs to the bacterial ribosomal protein bL36 family.

In Prochlorococcus marinus (strain MIT 9515), this protein is Large ribosomal subunit protein bL36A.